Consider the following 201-residue polypeptide: Small ribosomal subunit protein uS4c (201 aa).

A disordered region spans residues 14–43 (RLGALPGLTSKRPRAGSDLRNQSRPGKKSQ). The S4 RNA-binding domain maps to 89–169 (MRLDNILFRL…LPKHLTFHTL (81 aa)).

Belongs to the universal ribosomal protein uS4 family. In terms of assembly, part of the 30S ribosomal subunit. Contacts protein S5. The interaction surface between S4 and S5 is involved in control of translational fidelity.

It is found in the plastid. It localises to the chloroplast. In terms of biological role, one of the primary rRNA binding proteins, it binds directly to 16S rRNA where it nucleates assembly of the body of the 30S subunit. With S5 and S12 plays an important role in translational accuracy. The chain is Small ribosomal subunit protein uS4c (rps4) from Gossypium hirsutum (Upland cotton).